A 564-amino-acid chain; its full sequence is ATP-dependent RNA helicase DBP3 (564 aa).

The segment at 31–125 is disordered; that stretch reads TKQQTMSKDK…TNYTQSSKLS (95 aa). Basic and acidic residues predominate over residues 58 to 73; the sequence is ADSKKQRKLEKQEKKD. Residues 74-96 show a composition bias toward basic residues; that stretch reads KKDKKDKKEKKEKKEKKHKKEKK. Positions 112 to 125 are enriched in low complexity; it reads SSSSTNYTQSSKLS. Positions 155–181 match the Q motif motif; that stretch reads LSFDQVQLTSAITSKLSKFDKPTPIQS. The 173-residue stretch at 184-356 folds into the Helicase ATP-binding domain; the sequence is WPFLLSGKDV…NNFMNSPVKV (173 aa). 197 to 204 contributes to the ATP binding site; sequence AETGSGKT. The short motif at 303–306 is the DEAD box element; sequence DEAD. Positions 385-534 constitute a Helicase C-terminal domain; it reads KLIQLLRKYN…PVPEELLKFG (150 aa).

This sequence belongs to the DEAD box helicase family. DDX5/DBP2 subfamily.

The protein localises to the nucleus. The protein resides in the nucleolus. It carries out the reaction ATP + H2O = ADP + phosphate + H(+). ATP-dependent RNA helicase required for 60S ribosomal subunit synthesis. Involved in efficient pre-rRNA processing, predominantly at site A3, which is necessary for the normal formation of 25S and 5.8S rRNAs. The sequence is that of ATP-dependent RNA helicase DBP3 (DBP3) from Candida albicans (strain SC5314 / ATCC MYA-2876) (Yeast).